The primary structure comprises 599 residues: Putative sensor histidine kinase NtrY-like (599 aa).

Transmembrane regions (helical) follow at residues 17-37, 44-64, 85-105, and 285-305; these read VLIF…FYVI, FSTI…LGVL, IVIA…VFSV, and IMFI…GVIF. An HAMP domain is found at 307–361; that stretch reads AKIVKPIKKLVTATDKVKDGDLTVQVPENEVDKDEIGTLYAAFNRMIKQLSRQQR. A Histidine kinase domain is found at 378–589; it reads KVAHEIKNPL…IIDIKFDLKK (212 aa). Position 381 is a phosphohistidine; by autocatalysis (histidine 381).

It is found in the cell membrane. The catalysed reaction is ATP + protein L-histidine = ADP + protein N-phospho-L-histidine.. In terms of biological role, member of the two-component regulatory system RF_0427/RF_0895. This chain is Putative sensor histidine kinase NtrY-like, found in Rickettsia felis (strain ATCC VR-1525 / URRWXCal2) (Rickettsia azadi).